The sequence spans 406 residues: Phosphoglycerate kinase (406 aa).

Substrate-binding positions include D23 to N25, R38, H61 to R64, R117, and R157. Residues E331 and G357–I360 contribute to the ATP site.

The protein belongs to the phosphoglycerate kinase family. In terms of assembly, monomer.

The protein resides in the cytoplasm. The catalysed reaction is (2R)-3-phosphoglycerate + ATP = (2R)-3-phospho-glyceroyl phosphate + ADP. Its pathway is carbohydrate degradation; glycolysis; pyruvate from D-glyceraldehyde 3-phosphate: step 2/5. This is Phosphoglycerate kinase from Methanopyrus kandleri (strain AV19 / DSM 6324 / JCM 9639 / NBRC 100938).